The following is a 161-amino-acid chain: Nucleotide-binding protein Tcr_1902 (161 aa).

Belongs to the YajQ family.

Its function is as follows. Nucleotide-binding protein. This is Nucleotide-binding protein Tcr_1902 from Hydrogenovibrio crunogenus (strain DSM 25203 / XCL-2) (Thiomicrospira crunogena).